The sequence spans 600 residues: Adenine deaminase 4 (600 aa).

This sequence belongs to the metallo-dependent hydrolases superfamily. Adenine deaminase family. The cofactor is Mn(2+).

The enzyme catalyses adenine + H2O + H(+) = hypoxanthine + NH4(+). This Rhizobium meliloti (strain 1021) (Ensifer meliloti) protein is Adenine deaminase 4.